The primary structure comprises 197 residues: Probable 26S proteasome non-ATPase regulatory subunit 9 (197 aa).

A PDZ domain is found at 75-166; it reads KIVVEMENEN…KIIRVTVIRE (92 aa).

The protein belongs to the proteasome subunit p27 family.

Functionally, acts as a chaperone during the assembly of the 26S proteasome, specifically of the base subcomplex of the 19S regulatory complex (RC). The chain is Probable 26S proteasome non-ATPase regulatory subunit 9 (psmd-9) from Caenorhabditis elegans.